The chain runs to 480 residues: Aromatic-L-amino-acid decarboxylase (480 aa).

M1 is subject to N-acetylmethionine. Tandem repeats lie at residues 58–115 (GDIE…TELE) and 118–178 (MLDW…TQAA). The segment at 58–178 (GDIERIIMPG…AASPELTQAA (121 aa)) is 2 X approximate tandem repeats. T82 provides a ligand contact to substrate. Pyridoxal 5'-phosphate contacts are provided by A148 and S149. H192 is a binding site for substrate. Pyridoxal 5'-phosphate is bound by residues T246 and N300. K303 carries the post-translational modification N6-(pyridoxal phosphate)lysine.

It belongs to the group II decarboxylase family. In terms of assembly, homodimer. Pyridoxal 5'-phosphate serves as cofactor.

It carries out the reaction L-dopa + H(+) = dopamine + CO2. The enzyme catalyses 5-hydroxy-L-tryptophan + H(+) = serotonin + CO2. It functions in the pathway catecholamine biosynthesis; dopamine biosynthesis; dopamine from L-tyrosine: step 2/2. In terms of biological role, catalyzes the decarboxylation of L-3,4-dihydroxyphenylalanine (DOPA) to dopamine and L-5-hydroxytryptophan to serotonin. The polypeptide is Aromatic-L-amino-acid decarboxylase (DDC) (Cavia porcellus (Guinea pig)).